The chain runs to 47 residues: Wound-induced basic protein (47 aa).

The tract at residues 1–47 (MIYDVNSPLFRSFLSQKGGSSDKRKTEEQKPKEHRPKASENKPIMTE) is disordered. The span at 20–40 (SSDKRKTEEQKPKEHRPKASE) shows a compositional bias: basic and acidic residues.

In terms of tissue distribution, abundant in radicals and epicotyls of seedlings and higher in the roots than in stems and leaves of mature plants.

This is Wound-induced basic protein (PR4) from Phaseolus vulgaris (Kidney bean).